The sequence spans 318 residues: Thymidylate synthase (318 aa).

Residues Arg25 and 180–181 each bind dUMP; that span reads RR. The Nucleophile role is filled by Cys200. DUMP is bound by residues 220–223, Asn231, and 261–263; these read RSGD and HIY. Asp223 contributes to the (6R)-5,10-methylene-5,6,7,8-tetrahydrofolate binding site. Residue Ala317 participates in (6R)-5,10-methylene-5,6,7,8-tetrahydrofolate binding.

Belongs to the thymidylate synthase family. Bacterial-type ThyA subfamily. Homodimer.

It localises to the cytoplasm. The catalysed reaction is dUMP + (6R)-5,10-methylene-5,6,7,8-tetrahydrofolate = 7,8-dihydrofolate + dTMP. Its pathway is pyrimidine metabolism; dTTP biosynthesis. Its function is as follows. Catalyzes the reductive methylation of 2'-deoxyuridine-5'-monophosphate (dUMP) to 2'-deoxythymidine-5'-monophosphate (dTMP) while utilizing 5,10-methylenetetrahydrofolate (mTHF) as the methyl donor and reductant in the reaction, yielding dihydrofolate (DHF) as a by-product. This enzymatic reaction provides an intracellular de novo source of dTMP, an essential precursor for DNA biosynthesis. The chain is Thymidylate synthase from Lactobacillus delbrueckii subsp. bulgaricus (strain ATCC BAA-365 / Lb-18).